A 361-amino-acid chain; its full sequence is Holliday junction branch migration complex subunit RuvB (361 aa).

2 stretches are compositionally biased toward polar residues: residues M1–V15 and E28–A40. The disordered stretch occupies residues M1–S41. Residues P13 to Y203 are large ATPase domain (RuvB-L). ATP-binding positions include L42, R43, G84, K87, T88, T89, E150–F152, R193, Y203, and R240. T88 lines the Mg(2+) pocket. Residues E204–Q274 are small ATPAse domain (RuvB-S). The tract at residues K277–S361 is head domain (RuvB-H). DNA contacts are provided by R332 and R337.

Belongs to the RuvB family. Homohexamer. Forms an RuvA(8)-RuvB(12)-Holliday junction (HJ) complex. HJ DNA is sandwiched between 2 RuvA tetramers; dsDNA enters through RuvA and exits via RuvB. An RuvB hexamer assembles on each DNA strand where it exits the tetramer. Each RuvB hexamer is contacted by two RuvA subunits (via domain III) on 2 adjacent RuvB subunits; this complex drives branch migration. In the full resolvosome a probable DNA-RuvA(4)-RuvB(12)-RuvC(2) complex forms which resolves the HJ.

Its subcellular location is the cytoplasm. It carries out the reaction ATP + H2O = ADP + phosphate + H(+). Functionally, the RuvA-RuvB-RuvC complex processes Holliday junction (HJ) DNA during genetic recombination and DNA repair, while the RuvA-RuvB complex plays an important role in the rescue of blocked DNA replication forks via replication fork reversal (RFR). RuvA specifically binds to HJ cruciform DNA, conferring on it an open structure. The RuvB hexamer acts as an ATP-dependent pump, pulling dsDNA into and through the RuvAB complex. RuvB forms 2 homohexamers on either side of HJ DNA bound by 1 or 2 RuvA tetramers; 4 subunits per hexamer contact DNA at a time. Coordinated motions by a converter formed by DNA-disengaged RuvB subunits stimulates ATP hydrolysis and nucleotide exchange. Immobilization of the converter enables RuvB to convert the ATP-contained energy into a lever motion, pulling 2 nucleotides of DNA out of the RuvA tetramer per ATP hydrolyzed, thus driving DNA branch migration. The RuvB motors rotate together with the DNA substrate, which together with the progressing nucleotide cycle form the mechanistic basis for DNA recombination by continuous HJ branch migration. Branch migration allows RuvC to scan DNA until it finds its consensus sequence, where it cleaves and resolves cruciform DNA. In terms of biological role, participates in UV-tolerance of Synechocystis PCC 6803. The protein is Holliday junction branch migration complex subunit RuvB of Synechocystis sp. (strain ATCC 27184 / PCC 6803 / Kazusa).